A 215-amino-acid polypeptide reads, in one-letter code: Probable peptidyl-prolyl cis-trans isomerase (215 aa).

Residues 38 to 197 (DGIYAVMETN…RRGAAAKRFV (160 aa)) form the PPIase cyclophilin-type domain.

It belongs to the cyclophilin-type PPIase family.

It catalyses the reaction [protein]-peptidylproline (omega=180) = [protein]-peptidylproline (omega=0). PPIases accelerate the folding of proteins. It catalyzes the cis-trans isomerization of proline imidic peptide bonds in oligopeptides. This Treponema pallidum (strain Nichols) protein is Probable peptidyl-prolyl cis-trans isomerase (ppiB).